A 37-amino-acid chain; its full sequence is Large ribosomal subunit protein bL36 (37 aa).

It belongs to the bacterial ribosomal protein bL36 family.

This is Large ribosomal subunit protein bL36 from Mycoplasma genitalium (strain ATCC 33530 / DSM 19775 / NCTC 10195 / G37) (Mycoplasmoides genitalium).